The chain runs to 479 residues: uncharacterized protein (479 aa).

Residues 150 to 158 (TSGSTGKPK), D360, R375, and K462 each bind ATP.

This sequence belongs to the ATP-dependent AMP-binding enzyme family.

Functionally, may be involved in fatty acid metabolism. This is an uncharacterized protein from Bacillus subtilis (strain 168).